Reading from the N-terminus, the 587-residue chain is Tectonic-1 (587 aa).

The N-terminal stretch at 1–22 (MRPRGLPPLLVVLLGCWASVSA) is a signal peptide. N-linked (GlcNAc...) asparagine glycosylation is present at Asn36. The tract at residues 46–68 (GTFPSTRPPGTPRAPGPSSGPRP) is disordered. Over residues 51–68 (TRPPGTPRAPGPSSGPRP) the composition is skewed to pro residues. N-linked (GlcNAc...) asparagine glycans are attached at residues Asn295 and Asn528.

The protein belongs to the tectonic family. Part of the tectonic-like complex (also named B9 complex).

It is found in the cytoplasm. The protein resides in the cytoskeleton. It localises to the cilium basal body. Its subcellular location is the secreted. In terms of biological role, component of the tectonic-like complex, a complex localized at the transition zone of primary cilia and acting as a barrier that prevents diffusion of transmembrane proteins between the cilia and plasma membranes. Regulator of Hedgehog (Hh), required for both activation and inhibition of the Hh pathway in the patterning of the neural tube. During neural tube development, it is required for formation of the most ventral cell types and for full Hh pathway activation. Functions in Hh signal transduction to fully activate the pathway in the presence of high Hh levels and to repress the pathway in the absence of Hh signals. Modulates Hh signal transduction downstream of SMO and RAB23. The sequence is that of Tectonic-1 (TCTN1) from Homo sapiens (Human).